Consider the following 324-residue polypeptide: Glyoxylate/hydroxypyruvate reductase B (324 aa).

Catalysis depends on residues R237 and E266. H285 acts as the Proton donor in catalysis.

Belongs to the D-isomer specific 2-hydroxyacid dehydrogenase family. GhrB subfamily. Homodimer.

Its subcellular location is the cytoplasm. It carries out the reaction glycolate + NADP(+) = glyoxylate + NADPH + H(+). The catalysed reaction is (R)-glycerate + NAD(+) = 3-hydroxypyruvate + NADH + H(+). The enzyme catalyses (R)-glycerate + NADP(+) = 3-hydroxypyruvate + NADPH + H(+). Catalyzes the NADPH-dependent reduction of glyoxylate and hydroxypyruvate into glycolate and glycerate, respectively. This Shigella flexneri serotype 5b (strain 8401) protein is Glyoxylate/hydroxypyruvate reductase B.